Consider the following 364-residue polypeptide: Heat-inducible transcription repressor HrcA (364 aa).

The protein belongs to the HrcA family.

Negative regulator of class I heat shock genes (grpE-dnaK-dnaJ and groELS operons). Prevents heat-shock induction of these operons. This is Heat-inducible transcription repressor HrcA from Cyanothece sp. (strain PCC 7425 / ATCC 29141).